The sequence spans 615 residues: MAVYVGMLRVARLCARSPRVLGARVGLSRVWQEARLWGVRPLSSGELDHTVPLPVGGFSYVQGHVGLHLSNKTVGRCLDATAQRVPDQEALVVHHENIRLTFAQLKEEVDKAASGLLSIGLRKGDRLGMWGPNSYAWVLMQLATAQAGIILVSVNPAYQAMELEYALKKVGCKALVFPKQFKTQQYYNILKQICPEVEKAQPGALKSQRLPDLTTVISVDAHLPGTLLLDEVVAAGSQEQNLTRLRHTQQFLSCHDPINIQFTSGTTGSPKGATLSHYNIVNNANMIGQRLRLHQKTPEESRVVLPSPLYHCLGSVGGTMVSLMHGVTLILCSPVFEGKKTLEAISRERGCFLYGTPTMFVDVLNQPDFSSYDISTMRGGVIAGSPAPPELIRAIINKLNMKELVVAYGTTENSPVTFMNFTEDTVEQKAESVGRVMPHTEAQIVNTETGTLTELNTPGELCIRGYCVMLGYWGEPQKTEEAIGQDKWYRTGDIAMMDEQGFCKIVGRSKDMIIRGGENIYPAELEDFFHTHPQVQEVQVVGVKDDRMGEEICACIRLKEGEKTTAEEIKAFCKGKISHFKIPRYIVFVTNYPLTVSGKIQKFKLREQMEQHLNL.

The transit peptide at 1–42 (MAVYVGMLRVARLCARSPRVLGARVGLSRVWQEARLWGVRPL) directs the protein to the mitochondrion. N6-acetyllysine is present on K179. K182 bears the N6-acetyllysine; alternate mark. Position 182 is an N6-succinyllysine; alternate (K182). K199 is modified (N6-acetyllysine). 263 to 271 (TSGTTGSPK) is an ATP binding site. N6-acetyllysine is present on residues K340 and K398. At K478 the chain carries N6-succinyllysine. 2 residues coordinate ATP: D493 and R508. An N6-acetyllysine modification is found at K510. N6-acetyllysine; alternate occurs at positions 544 and 570. Residues K544 and K570 each carry the N6-succinyllysine; alternate modification. K599 lines the ATP pocket. K599 bears the N6-succinyllysine mark.

It belongs to the ATP-dependent AMP-binding enzyme family.

It localises to the mitochondrion. The catalysed reaction is a medium-chain fatty acid + ATP + CoA = a medium-chain fatty acyl-CoA + AMP + diphosphate. It carries out the reaction octanoate + ATP + CoA = octanoyl-CoA + AMP + diphosphate. Its function is as follows. Acyl-CoA synthases catalyze the initial reaction in fatty acid metabolism, by forming a thioester with CoA. Has some preference toward medium-chain substrates. Plays a role in adipocyte differentiation. The chain is Medium-chain acyl-CoA ligase ACSF2, mitochondrial from Bos taurus (Bovine).